A 20-amino-acid chain; its full sequence is Fibrinogen beta chain (20 aa).

Positions 1–20 (ATDYEDEEFPGAVPPSVGAR) are disordered. Threonine 2 is a glycosylation site (O-linked (GalNAc...) threonine). Tyrosine 4 bears the Sulfotyrosine mark.

In terms of assembly, heterohexamer; disulfide linked. Contains 2 sets of 3 non-identical chains (alpha, beta and gamma). The 2 heterotrimers are in head to head conformation with the N-termini in a small central domain. Post-translationally, conversion of fibrinogen to fibrin is triggered by thrombin, which cleaves fibrinopeptides A and B from alpha and beta chains, and thus exposes the N-terminal polymerization sites responsible for the formation of the soft clot.

Its subcellular location is the secreted. Its function is as follows. Cleaved by the protease thrombin to yield monomers which, together with fibrinogen alpha (FGA) and fibrinogen gamma (FGG), polymerize to form an insoluble fibrin matrix. Fibrin has a major function in hemostasis as one of the primary components of blood clots. In addition, functions during the early stages of wound repair to stabilize the lesion and guide cell migration during re-epithelialization. Was originally thought to be essential for platelet aggregation, based on in vitro studies using anticoagulated blood. However subsequent studies have shown that it is not absolutely required for thrombus formation in vivo. Enhances expression of SELP in activated platelets. Maternal fibrinogen is essential for successful pregnancy. Fibrin deposition is also associated with infection, where it protects against IFNG-mediated hemorrhage. May also facilitate the antibacterial immune response via both innate and T-cell mediated pathways. This is Fibrinogen beta chain (FGB) from Elephas maximus (Indian elephant).